Reading from the N-terminus, the 134-residue chain is Psoriasis susceptibility 1 candidate gene 2 protein homolog (134 aa).

An N-terminal signal peptide occupies residues 1–21; the sequence is MLTWKLLGLLVLCLCAGGISG. Residues 18-134 are disordered; it reads GISGNGDPSP…DLDPPQEEYR (117 aa). Pro residues-rich tracts occupy residues 39-67 and 81-98; these read PPLP…PPGS and PPKP…PDDP. Over residues 122–134 the composition is skewed to acidic residues; sequence EEPDLDPPQEEYR.

It is found in the secreted. The polypeptide is Psoriasis susceptibility 1 candidate gene 2 protein homolog (Psors1c2) (Mus musculus (Mouse)).